The chain runs to 202 residues: Na(+)-translocating NADH-quinone reductase subunit E (202 aa).

6 helical membrane-spanning segments follow: residues 11–31 (SIFL…FLAV), 39–59 (MGLG…NQLV), 79–99 (LSFL…QILE), 114–134 (GIFL…AFAV), 144–164 (IFYG…LAAV), and 180–200 (LGSV…FSGV).

This sequence belongs to the NqrDE/RnfAE family. In terms of assembly, composed of six subunits; NqrA, NqrB, NqrC, NqrD, NqrE and NqrF.

It is found in the cell inner membrane. It carries out the reaction a ubiquinone + n Na(+)(in) + NADH + H(+) = a ubiquinol + n Na(+)(out) + NAD(+). Its function is as follows. NQR complex catalyzes the reduction of ubiquinone-1 to ubiquinol by two successive reactions, coupled with the transport of Na(+) ions from the cytoplasm to the periplasm. NqrA to NqrE are probably involved in the second step, the conversion of ubisemiquinone to ubiquinol. The protein is Na(+)-translocating NADH-quinone reductase subunit E of Pseudoalteromonas atlantica (strain T6c / ATCC BAA-1087).